The chain runs to 475 residues: Ankyrin repeat, SAM and basic leucine zipper domain-containing protein 1 (475 aa).

Phosphoserine is present on residues S17, S18, and S20. 6 ANK repeats span residues 45-74 (EKNE…SVES), 78-107 (YGWT…NASF), 110-144 (DKQT…DPNV), 148-177 (RLMT…EVNS), 181-210 (NGYT…NKML), and 214-243 (DGKT…PLEG). Positions 272-334 (SYTAFGDLEI…KILAALKELE (63 aa)) constitute an SAM domain.

In terms of assembly, interacts with DDX4, PIWIL1, RANBP9 and TDRD1.

It localises to the cytoplasm. Plays a central role during spermatogenesis by repressing transposable elements and preventing their mobilization, which is essential for the germline integrity. Acts via the piRNA metabolic process, which mediates the repression of transposable elements during meiosis by forming complexes composed of piRNAs and Piwi proteins and governs the methylation and subsequent repression of transposons. Its association with pi-bodies suggests a participation in the primary piRNAs metabolic process. Required prior to the pachytene stage to facilitate the production of multiple types of piRNAs, including those associated with repeats involved in the regulation of retrotransposons. May act by mediating protein-protein interactions during germ cell maturation. The sequence is that of Ankyrin repeat, SAM and basic leucine zipper domain-containing protein 1 (ASZ1) from Mustela putorius furo (European domestic ferret).